A 547-amino-acid polypeptide reads, in one-letter code: Probable aquaporin-5 (547 aa).

Positions 1–13 (MSSSILNNRSARS) are enriched in polar residues. The disordered stretch occupies residues 1-208 (MSSSILNNRS…DPRIPPNDRR (208 aa)). The Cytoplasmic segment spans residues 1 to 269 (MSSSILNNRS…QWMNSNFKNH (269 aa)). Over residues 15 to 32 (PAGANPAFNPPAEASSSS) the composition is skewed to low complexity. 2 stretches are compositionally biased toward basic and acidic residues: residues 152–169 (EYER…DRYT) and 198–208 (DDPRIPPNDRR). The helical transmembrane segment at 270–290 (FVAGVGEFIGTTMFLFFAFAG) threads the bilayer. The Extracellular portion of the chain corresponds to 291-316 (TEVANIQADTTNRTTTGESTGSLNVS). Residues N302 and N314 are each glycosylated (N-linked (GlcNAc...) asparagine). The chain crosses the membrane as a helical span at residues 317–337 (KLLYISIIFGFSLMVNVWVFF). The Cytoplasmic portion of the chain corresponds to 338-363 (RISGGLFNPAVTMAMLMVKAISVTRA). The NPA 1 signature appears at 345-347 (NPA). A helical transmembrane segment spans residues 364-384 (IVLFLAQILGSMLASVVVRYL). The Extracellular portion of the chain corresponds to 385–400 (FPETFNVRTTLGGGAS). Residues 401–421 (LVQGVFIEALLTAELVFTIFM) traverse the membrane as a helical segment. At 422-428 (LAKEKHR) the chain is on the cytoplasmic side. Residues 429–449 (ATFIAPVGIGLALFIAEMVGV) traverse the membrane as a helical segment. Over 450 to 475 (QFTGGSLNPARSFGPCVITGSFDTEH) the chain is Extracellular. Positions 457 to 459 (NPA) match the NPA 2 motif. A helical membrane pass occupies residues 476-496 (WIYWVGPAIGSLIAVCFYWFI). At 497–547 (KTLEYEMANPGADGDDLNDPTKNPEKRAEIQASKPVPTAAFGSGKTASILS) the chain is on the cytoplasmic side. The disordered stretch occupies residues 510–547 (GDDLNDPTKNPEKRAEIQASKPVPTAAFGSGKTASILS).

Belongs to the MIP/aquaporin (TC 1.A.8) family.

The protein localises to the membrane. It catalyses the reaction H2O(in) = H2O(out). In terms of biological role, probable water channel that may have redundant functions with FgAQP3. This is Probable aquaporin-5 from Gibberella zeae (strain ATCC MYA-4620 / CBS 123657 / FGSC 9075 / NRRL 31084 / PH-1) (Wheat head blight fungus).